Reading from the N-terminus, the 297-residue chain is Large ribosomal subunit protein uL15m (297 aa).

Residues 1–21 constitute a mitochondrion transit peptide; the sequence is MSGNGVHGVHGALQLLRSLPK. A disordered region spans residues 23–69; the sequence is SLANLRPNPGSKKPERRRGRGRYRGRKCGRGHKGERQRGNRPRLGFE. Positions 36-53 are enriched in basic residues; it reads PERRRGRGRYRGRKCGRG.

The protein belongs to the universal ribosomal protein uL15 family. In terms of assembly, component of the mitochondrial ribosome large subunit (39S) which comprises a 16S rRNA and about 50 distinct proteins.

It is found in the mitochondrion. This chain is Large ribosomal subunit protein uL15m (MRPL15), found in Gallus gallus (Chicken).